Consider the following 202-residue polypeptide: Small ribosomal subunit protein uS4 (202 aa).

Residues 15-42 are disordered; that stretch reads LGDLPGLTRKAAKRSYPPGQHGQARRKR. Positions 90–152 constitute an S4 RNA-binding domain; that stretch reads NRLDNVCFRI…KCSKLLAEAN (63 aa).

This sequence belongs to the universal ribosomal protein uS4 family. Part of the 30S ribosomal subunit. Contacts protein S5. The interaction surface between S4 and S5 is involved in control of translational fidelity.

One of the primary rRNA binding proteins, it binds directly to 16S rRNA where it nucleates assembly of the body of the 30S subunit. Its function is as follows. With S5 and S12 plays an important role in translational accuracy. This is Small ribosomal subunit protein uS4 from Synechococcus sp. (strain CC9311).